Here is a 196-residue protein sequence, read N- to C-terminus: Probable malonic semialdehyde reductase RutE (196 aa).

It belongs to the nitroreductase family. HadB/RutE subfamily. The cofactor is FMN.

The catalysed reaction is 3-hydroxypropanoate + NADP(+) = 3-oxopropanoate + NADPH + H(+). May reduce toxic product malonic semialdehyde to 3-hydroxypropionic acid, which is excreted. In Shigella dysenteriae serotype 1 (strain Sd197), this protein is Probable malonic semialdehyde reductase RutE.